A 294-amino-acid chain; its full sequence is ATP synthase gamma chain (294 aa).

Belongs to the ATPase gamma chain family. F-type ATPases have 2 components, CF(1) - the catalytic core - and CF(0) - the membrane proton channel. CF(1) has five subunits: alpha(3), beta(3), gamma(1), delta(1), epsilon(1). CF(0) has three main subunits: a, b and c.

It is found in the cell inner membrane. Produces ATP from ADP in the presence of a proton gradient across the membrane. The gamma chain is believed to be important in regulating ATPase activity and the flow of protons through the CF(0) complex. This Nitrosomonas europaea (strain ATCC 19718 / CIP 103999 / KCTC 2705 / NBRC 14298) protein is ATP synthase gamma chain.